The sequence spans 448 residues: SET domain-containing protein SmydA-8, isoform B (448 aa).

The 232-residue stretch at 42-273 (PSWRVADSPI…AGAEITMSYA (232 aa)) folds into the SET domain.

Belongs to the class V-like SAM-binding methyltransferase superfamily.

In Drosophila melanogaster (Fruit fly), this protein is SET domain-containing protein SmydA-8, isoform B.